The following is a 78-amino-acid chain: MASLIQVRDLLALRSRMEAAQISQTLNTPQPMINAMLQQLESMGKAVRIQEEPDGCLSGSCKSCPEGKACLREWWALR.

Positions 56, 61, 64, and 70 each coordinate iron-sulfur cluster.

Belongs to the FeoC family.

Its function is as follows. May function as a transcriptional regulator that controls feoABC expression. This is Probable [Fe-S]-dependent transcriptional repressor from Escherichia coli O127:H6 (strain E2348/69 / EPEC).